A 186-amino-acid polypeptide reads, in one-letter code: Testis-expressed protein 29 (186 aa).

Residues 1-56 (MKDTKEIKRSPPHLLKKFAVCDIPLYDICDYNVTRERCRSLDCCFYRGVCYEKAVP) lie on the Extracellular side of the membrane. Residues 57–77 (IYVQVFFTLIWFVAGAFIIAV) traverse the membrane as a helical segment. Residues 78–151 (IYRVIQGTKK…AGCCLWMKSK (74 aa)) are Cytoplasmic-facing. Disordered regions lie at residues 104–138 (SPTP…KTES) and 151–186 (KPAK…QAAP). The span at 108 to 133 (ELIPEPIPEPIPEPIPEPIREPPPPV) shows a compositional bias: pro residues.

It is found in the membrane. This is Testis-expressed protein 29 (Tex29) from Mus musculus (Mouse).